The following is a 341-amino-acid chain: Zinc transporter ZIP11 (341 aa).

The next 7 membrane-spanning stretches (helical) occupy residues 12–32 (LLGT…VFVF), 44–64 (LGFA…APAV), 72–92 (GFGS…AAFV), 193–213 (IALL…AVGV), 262–284 (FWYG…FAVV), 289–306 (ILPY…YVIM), and 321–341 (LASW…VGLG).

It belongs to the ZIP transporter (TC 2.A.5) family.

It localises to the cell membrane. It is found in the nucleus. The protein localises to the cytoplasm. Its subcellular location is the golgi apparatus. It carries out the reaction Zn(2+)(in) = Zn(2+)(out). The catalysed reaction is Cu(2+)(in) = Cu(2+)(out). Functionally, zinc importer that regulates cytosolic zinc concentrations either via zinc influx from the extracellular compartment or efflux from intracellular organelles such as Golgi apparatus. May transport copper ions as well. The transport mechanism remains to be elucidated. In Bos taurus (Bovine), this protein is Zinc transporter ZIP11 (SLC39A11).